An 841-amino-acid chain; its full sequence is Protein translocase subunit SecA (841 aa).

Residues Q85, G103–T107, and D492 contribute to the ATP site. Residues E788–E841 are disordered. Positions 825, 827, 836, and 837 each coordinate Zn(2+). The segment covering S829–E841 has biased composition (basic residues).

This sequence belongs to the SecA family. Monomer and homodimer. Part of the essential Sec protein translocation apparatus which comprises SecA, SecYEG and auxiliary proteins SecDF. Other proteins may also be involved. Zn(2+) serves as cofactor.

The protein localises to the cell membrane. Its subcellular location is the cytoplasm. It catalyses the reaction ATP + H2O + cellular proteinSide 1 = ADP + phosphate + cellular proteinSide 2.. In terms of biological role, part of the Sec protein translocase complex. Interacts with the SecYEG preprotein conducting channel. Has a central role in coupling the hydrolysis of ATP to the transfer of proteins into and across the cell membrane, serving as an ATP-driven molecular motor driving the stepwise translocation of polypeptide chains across the membrane. This is Protein translocase subunit SecA from Bacillus pumilus (strain SAFR-032).